A 222-amino-acid chain; its full sequence is C-reactive protein (222 aa).

Residues 1–19 form the signal peptide; sequence MEKLSLCLLVIISLSNAFA. Gln20 carries the post-translational modification Pyrrolidone carboxylic acid. One can recognise a Pentraxin (PTX) domain in the interval 24 to 222; the sequence is IGKAFVFPKE…EVYVKPQLWP (199 aa). Cys55 and Cys113 form a disulfide bridge. The Ca(2+) site is built by Asn78, Glu154, Gln155, Asp156, and Gln166.

The protein belongs to the pentraxin family. As to quaternary structure, homopentamer. Pentraxin (or pentaxin) have a discoid arrangement of 5 non-covalently bound subunits. Interacts with FCN1; may regulate monocyte activation by FCN1. The cofactor is Ca(2+). Found in plasma.

Its subcellular location is the secreted. Its function is as follows. Displays several functions associated with host defense: it promotes agglutination, bacterial capsular swelling, phagocytosis and complement fixation through its calcium-dependent binding to phosphorylcholine. Can interact with DNA and histones and may scavenge nuclear material released from damaged circulating cells. This chain is C-reactive protein (CRP), found in Sus scrofa (Pig).